The following is a 347-amino-acid chain: MKGSHPNAGSLLEPLHKLNPFSENSTSGHRKNASDHSADGETRPIAIEMKDSKGNTVPVGNSRPSKASNWLAGLMEDKNQRWRRSMEDTHICLYDFGGNQDDGFVAVYDGHAGIQASDYCQKNLHKVLLEKVRNEPDRLVTDLMDETFVEVNSKIAKATHNDICGCTAAVAFFRYEKNRTRRVLYTANAGDARIVLCRDGKAIRLSYDHKGSDANESRRVTQLGGLMVQNRINGVLAVTRALGDTYLKELVSAHPFTTETRIWNGHDEFFIIACDGLWDVVSDQEAVDFVRNFVSPREAAVRLVEFALKRLSTDNITCIVVNLTRNPGDLDDSGLTADNDSYSNDYY.

Residues 1–41 (MKGSHPNAGSLLEPLHKLNPFSENSTSGHRKNASDHSADGE) are disordered. The span at 32 to 41 (NASDHSADGE) shows a compositional bias: basic and acidic residues. The PPM-type phosphatase domain occupies 71 to 323 (LAGLMEDKNQ…DNITCIVVNL (253 aa)). Positions 109, 110, 275, and 314 each coordinate Mn(2+).

This sequence belongs to the PP2C family. In terms of assembly, monomer. Mg(2+) serves as cofactor. Requires Mn(2+) as cofactor.

It catalyses the reaction O-phospho-L-seryl-[protein] + H2O = L-seryl-[protein] + phosphate. It carries out the reaction O-phospho-L-threonyl-[protein] + H2O = L-threonyl-[protein] + phosphate. Functionally, serine and threonine phosphatase. Has a specialized role in the heat shock response. May be responsible for the dephosphorylation of hsp90. In Schizosaccharomyces pombe (strain 972 / ATCC 24843) (Fission yeast), this protein is Protein phosphatase 2C homolog 1 (ptc1).